The chain runs to 92 residues: Protein S100-A6 (92 aa).

2 consecutive EF-hand domains span residues 12–47 (LVAIFHKYSSREGDKNTLSKGELKELIQKELTIGAE) and 48–83 (LEDSEIAKLLDDLDQNKDQVVNFQEYVTFLGALAMI). Positions 28 and 33 each coordinate Ca(2+). Lys-40 bears the N6-acetyllysine mark. 4 residues coordinate Ca(2+): Asp-61, Asn-63, Asp-65, and Glu-72.

This sequence belongs to the S-100 family. In terms of assembly, homodimer; head to tail assembly of 2 subunits. Interacts with CACYBP in a calcium-dependent manner. Interacts with ANXA2 and ANXA11 (via N-terminus). Interacts with SUGT1. Interacts with TP53; has higher affinity for TP53 that is phosphorylated on its N-terminal domain, and lower affinity for TP53 that is phosphorylated on its C-terminal domain. Interacts with tropomyosin. Interacts with FKBP4. Interacts with PPP5C (via TPR repeats); the interaction is calcium-dependent and modulates PPP5C activity. Interacts with TPPP; this interaction inhibits TPPP dimerization.

The protein resides in the nucleus envelope. It is found in the cytoplasm. The protein localises to the cell membrane. Functionally, may function as calcium sensor and modulator, contributing to cellular calcium signaling. May function by interacting with other proteins, such as TPR-containing proteins, and indirectly play a role in many physiological processes such as the reorganization of the actin cytoskeleton and in cell motility. Binds 2 calcium ions. Calcium binding is cooperative. This chain is Protein S100-A6 (S100A6), found in Equus caballus (Horse).